A 204-amino-acid chain; its full sequence is Urease accessory protein UreG (204 aa).

11–18 (GPVGAGKT) serves as a coordination point for GTP.

This sequence belongs to the SIMIBI class G3E GTPase family. UreG subfamily. As to quaternary structure, homodimer. UreD, UreF and UreG form a complex that acts as a GTP-hydrolysis-dependent molecular chaperone, activating the urease apoprotein by helping to assemble the nickel containing metallocenter of UreC. The UreE protein probably delivers the nickel.

The protein resides in the cytoplasm. Facilitates the functional incorporation of the urease nickel metallocenter. This process requires GTP hydrolysis, probably effectuated by UreG. The chain is Urease accessory protein UreG from Staphylococcus epidermidis (strain ATCC 12228 / FDA PCI 1200).